The sequence spans 132 residues: Small ribosomal subunit protein uS8 (132 aa).

It belongs to the universal ribosomal protein uS8 family. Part of the 30S ribosomal subunit. Contacts proteins S5 and S12.

In terms of biological role, one of the primary rRNA binding proteins, it binds directly to 16S rRNA central domain where it helps coordinate assembly of the platform of the 30S subunit. The chain is Small ribosomal subunit protein uS8 from Rhizobium rhizogenes (strain K84 / ATCC BAA-868) (Agrobacterium radiobacter).